A 939-amino-acid polypeptide reads, in one-letter code: UvrABC system protein A (939 aa).

32–39 provides a ligand contact to ATP; the sequence is GLSGSGKS. Residues 252–279 form a C4-type zinc finger; the sequence is CPDCGISIGEISPSMFSFNAPFGKCDVC. ABC transporter domains are found at residues 309 to 588 and 608 to 936; these read WGEG…KESI and AGKN…QYLK. 640 to 647 provides a ligand contact to ATP; the sequence is GVSGSGKS. The C4-type zinc-finger motif lies at 739–765; sequence CEACKGDGIVRIEMQFLSDVYVPCDVC.

Belongs to the ABC transporter superfamily. UvrA family. Forms a heterotetramer with UvrB during the search for lesions.

It is found in the cytoplasm. In terms of biological role, the UvrABC repair system catalyzes the recognition and processing of DNA lesions. UvrA is an ATPase and a DNA-binding protein. A damage recognition complex composed of 2 UvrA and 2 UvrB subunits scans DNA for abnormalities. When the presence of a lesion has been verified by UvrB, the UvrA molecules dissociate. This Clostridium acetobutylicum (strain ATCC 824 / DSM 792 / JCM 1419 / IAM 19013 / LMG 5710 / NBRC 13948 / NRRL B-527 / VKM B-1787 / 2291 / W) protein is UvrABC system protein A.